A 916-amino-acid chain; its full sequence is Protein translocase subunit SecA (916 aa).

ATP contacts are provided by residues Q87, 105 to 109, and D512; that span reads GEGKT. A disordered region spans residues 857 to 916; sequence QHAEAPSMEQAVAGEDEELPEGPAPVVPLEPVRNEQKIGRNEPCPCGSGKKYKHCHGQLD. Zn(2+)-binding residues include C900, C902, C911, and H912. Residues 906 to 916 show a composition bias toward basic residues; it reads KKYKHCHGQLD.

Belongs to the SecA family. As to quaternary structure, monomer and homodimer. Part of the essential Sec protein translocation apparatus which comprises SecA, SecYEG and auxiliary proteins SecDF-YajC and YidC. Requires Zn(2+) as cofactor.

It is found in the cell inner membrane. Its subcellular location is the cytoplasm. The catalysed reaction is ATP + H2O + cellular proteinSide 1 = ADP + phosphate + cellular proteinSide 2.. In terms of biological role, part of the Sec protein translocase complex. Interacts with the SecYEG preprotein conducting channel. Has a central role in coupling the hydrolysis of ATP to the transfer of proteins into and across the cell membrane, serving both as a receptor for the preprotein-SecB complex and as an ATP-driven molecular motor driving the stepwise translocation of polypeptide chains across the membrane. In Pseudomonas paraeruginosa (strain DSM 24068 / PA7) (Pseudomonas aeruginosa (strain PA7)), this protein is Protein translocase subunit SecA.